We begin with the raw amino-acid sequence, 367 residues long: RNA-binding protein 48 (367 aa).

Residues 46–124 (QYLLIQGVPA…GLLHVCYAPE (79 aa)) enclose the RRM domain. The span at 217–228 (PVDRASDSSKDG) shows a compositional bias: basic and acidic residues. Disordered regions lie at residues 217-243 (PVDR…HNGS), 277-303 (RTTQ…TNPS), and 339-367 (EVIS…RRRI). Basic and acidic residues predominate over residues 347–356 (PPEDKPEDVN).

Belongs to the RBM48 family. In terms of assembly, component of the minor spliceosome. Within this complex, interacts with ARMC7 and PRPF8/PRP8.

Its function is as follows. As a component of the minor spliceosome, involved in the splicing of U12-type introns in pre-mRNAs. This is RNA-binding protein 48 (RBM48) from Pongo abelii (Sumatran orangutan).